The primary structure comprises 248 residues: Probable aquaporin TIP2-1 (248 aa).

2 helical membrane-spanning segments follow: residues 20–40 (AYVA…GSAI) and 54–74 (AGLV…VSVA). The NPA 1 signature appears at 83–85 (NPA). The next 3 helical transmembrane spans lie at 97–119 (TILT…CLLL), 141–161 (GVVM…ATAA), and 168–188 (LGTI…LAAG). The NPA 2 signature appears at 196–198 (NPA). Residues 217 to 237 (WVGPLIGGGLAGLVYGDVFIG) form a helical membrane-spanning segment.

The protein belongs to the MIP/aquaporin (TC 1.A.8) family. TIP (TC 1.A.8.10) subfamily. As to expression, expressed in roots and anthers.

Its subcellular location is the vacuole membrane. In terms of biological role, aquaporins facilitate the transport of water and small neutral solutes across cell membranes. May be involved in transport from the vacuolar compartment to the cytoplasm. The chain is Probable aquaporin TIP2-1 (TIP2-1) from Oryza sativa subsp. japonica (Rice).